A 272-amino-acid polypeptide reads, in one-letter code: Acidic leucine-rich nuclear phosphoprotein 32 family member B (272 aa).

LRR repeat units lie at residues 18–38 (AVRE…EGLT), 43–64 (NLEF…PKLP), 65–87 (KLKK…AEEL), and 89–110 (SLTH…EPLK). Residues 123–161 (CEVTNRSDYRETVFRLLPQLSYLDGYDREDQEAPDSDVE) enclose the LRRCT domain. The segment covering 149 to 254 (DREDQEAPDS…DEDEDEEEEE (106 aa)) has biased composition (acidic residues). Positions 149-272 (DREDQEAPDS…RETDDEGEDD (124 aa)) are disordered. Ser164 and Ser171 each carry phosphoserine. Residues 255–265 (SGKGEKRKRET) show a composition bias toward basic and acidic residues. Residues 260–263 (KRKR) carry the Nuclear localization signal motif. A Phosphothreonine modification is found at Thr265.

The protein belongs to the ANP32 family. As to quaternary structure, interacts with histones H3 and H4. Interacts with KLF5; this interaction induces promoter region-specific histone incorporation and inhibition of histone acetylation by ANP32B. Some glutamate residues are glycylated by TTLL8. This modification occurs exclusively on glutamate residues and results in a glycine chain on the gamma-carboxyl group. In terms of processing, directly cleaved by caspase-3/CASP3.

The protein localises to the nucleus. Functionally, multifunctional protein that is involved in the regulation of many processes including cell proliferation, apoptosis, cell cycle progression or transcription. Regulates the proliferation of neuronal stem cells, differentiation of leukemic cells and progression from G1 to S phase of the cell cycle. As negative regulator of caspase-3-dependent apoptosis, may act as an antagonist of ANP32A in regulating tissue homeostasis. Exhibits histone chaperone properties, able to recruit histones to certain promoters, thus regulating the transcription of specific genes. Also plays an essential role in the nucleocytoplasmic transport of specific mRNAs via the uncommon nuclear mRNA export receptor XPO1/CRM1. Participates in the regulation of adequate adaptive immune responses by acting on mRNA expression and cell proliferation. This Mus musculus (Mouse) protein is Acidic leucine-rich nuclear phosphoprotein 32 family member B (Anp32b).